Reading from the N-terminus, the 366-residue chain is Quinolinate synthase (366 aa).

Iminosuccinate contacts are provided by His44 and Ser61. Cys108 contacts [4Fe-4S] cluster. Iminosuccinate is bound by residues Tyr139 to Asn141 and Ser160. Cys228 is a [4Fe-4S] cluster binding site. Residues His254–Glu256 and Thr271 each bind iminosuccinate. Cys318 serves as a coordination point for [4Fe-4S] cluster.

It belongs to the quinolinate synthase family. Type 3 subfamily. [4Fe-4S] cluster is required as a cofactor.

It localises to the cytoplasm. It carries out the reaction iminosuccinate + dihydroxyacetone phosphate = quinolinate + phosphate + 2 H2O + H(+). It functions in the pathway cofactor biosynthesis; NAD(+) biosynthesis; quinolinate from iminoaspartate: step 1/1. Catalyzes the condensation of iminoaspartate with dihydroxyacetone phosphate to form quinolinate. The protein is Quinolinate synthase of Listeria monocytogenes serovar 1/2a (strain ATCC BAA-679 / EGD-e).